A 188-amino-acid polypeptide reads, in one-letter code: COMM domain-containing protein 1 (188 aa).

A sufficient for interaction with SLC12A2 region spans residues 1 to 122 (MAAELEGSKC…CWDRGLRSLS (122 aa)). Positions 100, 109, and 133 each coordinate Cu cation. In terms of domain architecture, COMM spans 117 to 185 (GLRSLSWRVD…EVEESISTLM (69 aa)). Residues 124–188 (RVDGKSQSRH…ESISTLMQPA (65 aa)) are required for binding to PtdIns(4,5)P2.

This sequence belongs to the COMM domain-containing protein 1 family. In terms of assembly, component of the commander complex consisting of the CCC subcomplex and the retriever subcomplex. Component of the CCC (COMMD/CCDC22/CCDC93) subcomplex consisting of COMMD1, COMMD2, COMMD3, COMMD4, COMMD5, COMMD6, COMMD7, COMMD8, COMMD9, COMMD10, CCDC22 and CCDC93; within the complex forms a heterodimer with COMMD6. Interacts with VPS35L; the interaction associates the CCC complex with the retriever complex. Identified in a complex with an E3 ubiquitin ligase complex composed of TCEB1/elongin C, CUL2, SOCS1 and RBX1; in the complex interacts directly with SOCS1 and CUL2. Identified in a complex with NF-kappa-B. Interacts directly with SLC12A2. Interacts directly with ATP7B (via the N-terminal region). Interacts with ATP7A. Interacts with FAM107A; this interaction stabilizes COMMD1 in the nucleus. Interacts with CCS, CDKN2A, RELA, REL, RELB, NFKB1/p105, NFKB2/p100, NFKBIB, SCNN1D, SCNN1B, CFTR, CLU, SGK1, AKT1, CUL1, CUL2, CUL3, CUL4A, CUL4B, CUL5, CUL7, HIF1A. Ubiquitinated; undergoes both 'Lys-63'- and 'Lys-48'-linked polyubiquitination. Ubiquitinated by XIAP, leading to its proteasomal degradation.

The protein resides in the nucleus. Its subcellular location is the cytoplasm. It is found in the endosome membrane. It localises to the cytoplasmic vesicle. The protein localises to the early endosome. The protein resides in the recycling endosome. Functionally, scaffold protein in the commander complex that is essential for endosomal recycling of transmembrane cargos; the commander complex is composed of the CCC subcomplex and the retriever subcomplex. Can modulate activity of cullin-RING E3 ubiquitin ligase (CRL) complexes by displacing CAND1; in vitro promotes CRL E3 activity and dissociates CAND1 from CUL1 and CUL2. Promotes ubiquitination of NF-kappa-B subunit RELA and its subsequent proteasomal degradation. Down-regulates NF-kappa-B activity. Involved in the regulation of membrane expression and ubiquitination of SLC12A2. Modulates Na(+) transport in epithelial cells by regulation of apical cell surface expression of amiloride-sensitive sodium channel (ENaC) subunits and by promoting their ubiquitination presumably involving NEDD4L. Promotes the localization of SCNN1D to recycling endosomes. Promotes CFTR cell surface expression through regulation of its ubiquitination. Down-regulates SOD1 activity by interfering with its homodimerization. Plays a role in copper ion homeostasis. Involved in copper-dependent ATP7A trafficking between the trans-Golgi network and vesicles in the cell periphery; the function is proposed to depend on its association within the CCC complex and cooperation with the WASH complex on early endosomes. Can bind one copper ion per monomer. May function to facilitate biliary copper excretion within hepatocytes. Binds to phosphatidylinositol 4,5-bisphosphate (PtdIns(4,5)P2). Involved in the regulation of HIF1A-mediated transcription; competes with ARNT/Hif-1-beta for binding to HIF1A resulting in decreased DNA binding and impaired transcriptional activation by HIF-1. Negatively regulates neuroblastoma G1/S phase cell cycle progression and cell proliferation by stimulating ubiquitination of NF-kappa-B subunit RELA and NF-kappa-B degradation in a FAM107A- and actin-dependent manner. The chain is COMM domain-containing protein 1 (COMMD1) from Bos taurus (Bovine).